The primary structure comprises 298 residues: Ribosomal protein L11 methyltransferase (298 aa).

Thr152, Gly173, Asp195, and Asn234 together coordinate S-adenosyl-L-methionine.

It belongs to the methyltransferase superfamily. PrmA family.

The protein localises to the cytoplasm. It catalyses the reaction L-lysyl-[protein] + 3 S-adenosyl-L-methionine = N(6),N(6),N(6)-trimethyl-L-lysyl-[protein] + 3 S-adenosyl-L-homocysteine + 3 H(+). In terms of biological role, methylates ribosomal protein L11. The chain is Ribosomal protein L11 methyltransferase from Ralstonia nicotianae (strain ATCC BAA-1114 / GMI1000) (Ralstonia solanacearum).